The following is a 140-amino-acid chain: Putative pre-16S rRNA nuclease (140 aa).

It belongs to the YqgF nuclease family.

The protein resides in the cytoplasm. In terms of biological role, could be a nuclease involved in processing of the 5'-end of pre-16S rRNA. The chain is Putative pre-16S rRNA nuclease from Serratia proteamaculans (strain 568).